A 206-amino-acid chain; its full sequence is MGDLGKGYKLVFLGDQGVGKTSIITCFMYGKFDTSYQATIGIDFLSKTTRYEDRTFRLQLWDTAGQERFKSLVPSYIRDSSVAVIVYDVASKQSFINTSKWIEEVRAERGSYVIIVLVGNKTDLVNKRQVSIEEGENKAREFGALFMETSAKAGFNIKPLFCKITSALQGNEAVSWTKQEDLVDVNLKPLMFSSQANHQQESNCSC.

14-21 (GDQGVGKT) contacts GTP. Positions 36–44 (YQATIGIDF) match the Effector region motif. Residues 62–66 (DTAGQ), 120–123 (NKTD), and 150–151 (SA) contribute to the GTP site. S-geranylgeranyl cysteine attachment occurs at residues C204 and C206. At C206 the chain carries Cysteine methyl ester.

The protein belongs to the small GTPase superfamily. Rab family.

It localises to the golgi apparatus membrane. Protein transport. Regulator of membrane traffic from the Golgi apparatus towards the endoplasmic reticulum (ER). This is Ras-related protein RABH1a (RABH1A) from Arabidopsis thaliana (Mouse-ear cress).